A 335-amino-acid polypeptide reads, in one-letter code: Tetraacyldisaccharide 4'-kinase (335 aa).

Residue Thr-58–Thr-65 coordinates ATP.

It belongs to the LpxK family.

The enzyme catalyses a lipid A disaccharide + ATP = a lipid IVA + ADP + H(+). The protein operates within glycolipid biosynthesis; lipid IV(A) biosynthesis; lipid IV(A) from (3R)-3-hydroxytetradecanoyl-[acyl-carrier-protein] and UDP-N-acetyl-alpha-D-glucosamine: step 6/6. Functionally, transfers the gamma-phosphate of ATP to the 4'-position of a tetraacyldisaccharide 1-phosphate intermediate (termed DS-1-P) to form tetraacyldisaccharide 1,4'-bis-phosphate (lipid IVA). The chain is Tetraacyldisaccharide 4'-kinase from Caulobacter vibrioides (strain ATCC 19089 / CIP 103742 / CB 15) (Caulobacter crescentus).